A 489-amino-acid polypeptide reads, in one-letter code: N-succinylglutamate 5-semialdehyde dehydrogenase (489 aa).

Position 223–228 (223–228) interacts with NAD(+); it reads GSASTG. Residues Glu-246 and Cys-280 contribute to the active site.

Belongs to the aldehyde dehydrogenase family. AstD subfamily.

It carries out the reaction N-succinyl-L-glutamate 5-semialdehyde + NAD(+) + H2O = N-succinyl-L-glutamate + NADH + 2 H(+). It functions in the pathway amino-acid degradation; L-arginine degradation via AST pathway; L-glutamate and succinate from L-arginine: step 4/5. Catalyzes the NAD-dependent reduction of succinylglutamate semialdehyde into succinylglutamate. This chain is N-succinylglutamate 5-semialdehyde dehydrogenase, found in Acinetobacter baylyi (strain ATCC 33305 / BD413 / ADP1).